Reading from the N-terminus, the 379-residue chain is Ascochitine biosynthesis cluster protein 8 (379 aa).

3 consecutive transmembrane segments (helical) span residues 87–107 (ELIA…LDLE), 116–136 (VGPV…VAAC), and 141–161 (IKVF…VVAL).

The protein resides in the membrane. The protein operates within mycotoxin biosynthesis. Its function is as follows. Part of the gene cluster that mediates the biosynthesis of the selective antifungal agent ascochitine, an o-quinone methide that plays a possible protective role against other microbial competitors in nature and is considered to be important for pathogenicity of legume-associated Didymella species. The pathway probably begins with the synthesis of a keto-aldehyde intermediate by the ascochitine non-reducing polyketide synthase pksAC from successive condensations of 4 malonyl-CoA units, presumably with a simple acetyl-CoA starter unit. Release of the keto-aldehyde intermediate is consistent with the presence of the C-terminal reductive release domain. The HR-PKS (orf7) probably makes a diketide starter unit which is passed to the non-reducing polyketide synthase pksAC for further extension, producing ascochital and ascochitine. The aldehyde dehydrogenase (orf1), the 2-oxoglutarate-dependent dioxygenase (orf3) and the dehydrogenase (orf9) are probably involved in subsequent oxidations of methyl groups to the carboxylic acid of the heterocyclic ring. The ascochitine gene cluster also includes a gene encoding a short peptide with a cupin domain (orf2) that is often found in secondary metabolite gene clusters and which function has still to be determined. This Didymella fabae (Leaf and pod spot disease fungus) protein is Ascochitine biosynthesis cluster protein 8.